The chain runs to 351 residues: N-formyl peptide receptor 2 (351 aa).

Topologically, residues 1-27 are extracellular; that stretch reads METNFSTPLNEYEEVSYESAGYTVLRI. A glycan (N-linked (GlcNAc...) asparagine) is linked at Asn4. The chain crosses the membrane as a helical span at residues 28–50; sequence LPLVVLGVTFVLGVLGNGLVIWV. The Cytoplasmic segment spans residues 51-61; that stretch reads AGFRMTRTVTT. Residues 62-83 traverse the membrane as a helical segment; sequence ICYLNLALADFSFTATLPFLIV. At 84 to 100 the chain is on the extracellular side; sequence SMAMGEKWPFGWFLCKL. Cys98 and Cys176 are joined by a disulfide. The helical transmembrane segment at 101-121 threads the bilayer; the sequence is IHIVVDINLFGSVFLIGFIAL. The Cytoplasmic portion of the chain corresponds to 122 to 140; it reads DRCICVLHPVWAQNHRTVS. A helical membrane pass occupies residues 141 to 162; that stretch reads LAMKVIVGPWILALVLTLPVFL. At 163-205 the chain is on the extracellular side; that stretch reads FLTTVTIPNGDTYCTFNFASWGGTPEERLKVAITMLTARGIIR. Residues 206-226 form a helical membrane-spanning segment; sequence FVIGFSLPMSIVAICYGLIAA. Over 227–242 the chain is Cytoplasmic; it reads KIHKKGMIKSSRPLRV. A helical membrane pass occupies residues 243–266; it reads LTAVVASFFICWFPFQLVALLGTV. The Extracellular portion of the chain corresponds to 267 to 286; that stretch reads WLKEMLFYGKYKIIDILVNP. A helical membrane pass occupies residues 287–306; the sequence is TSSLAFFNSCLNPMLYVFVG. The Cytoplasmic segment spans residues 307-351; the sequence is QDFRERLIHSLPTSLERALSEDSAPTNDTAANSASPPAETELQAM. The disordered stretch occupies residues 325-351; sequence LSEDSAPTNDTAANSASPPAETELQAM. The span at 329-341 shows a compositional bias: polar residues; sequence SAPTNDTAANSAS.

Belongs to the G-protein coupled receptor 1 family. Interacts with Amyloid-beta protein 42, product of APP; the interaction takes place at the cell surface and the complex is then rapidly internalized. In terms of assembly, (Microbial infection) Interacts with Staphylococcus aureus protein SSL13; this interaction leads to the activation of neutrophils. In terms of tissue distribution, detected in lung, bone marrow, neutrophils, spleen and testis.

It localises to the cell membrane. Low affinity receptor for N-formyl-methionyl peptides, which are powerful neutrophil chemotactic factors. Binding of FMLP to the receptor causes activation of neutrophils. This response is mediated via a G-protein that activates a phosphatidylinositol-calcium second messenger system. The activation of LXA4R could result in an anti-inflammatory outcome counteracting the actions of pro-inflammatory signals such as LTB4 (leukotriene B4). Receptor for the chemokine-like protein FAM19A5, mediating FAM19A5-stimulated macrophage chemotaxis and the inhibitory effect on TNFSF11/RANKL-induced osteoclast differentiation. Acts as a receptor for humanin. This is N-formyl peptide receptor 2 (FPR2) from Homo sapiens (Human).